The sequence spans 102 residues: Putative septation protein SpoVG 2 (102 aa).

The protein belongs to the SpoVG family.

Its function is as follows. Could be involved in septation. This Listeria innocua serovar 6a (strain ATCC BAA-680 / CLIP 11262) protein is Putative septation protein SpoVG 2.